Consider the following 368-residue polypeptide: Flagellar P-ring protein (368 aa).

The first 24 residues, 1–24 (MNSIFRKIVFAAFLLLALPQFALA), serve as a signal peptide directing secretion.

This sequence belongs to the FlgI family. As to quaternary structure, the basal body constitutes a major portion of the flagellar organelle and consists of four rings (L,P,S, and M) mounted on a central rod.

It localises to the periplasm. It is found in the bacterial flagellum basal body. Functionally, assembles around the rod to form the L-ring and probably protects the motor/basal body from shearing forces during rotation. In Geotalea uraniireducens (strain Rf4) (Geobacter uraniireducens), this protein is Flagellar P-ring protein.